The sequence spans 384 residues: MAFSKDKTSRYSEHVDAYRAACGHHPDLKSFDSKIQQRTSNLIDSLTVEAKTGSVSPHAVHKEVIDIHLVEVSKAVADVITECGEEVWENGTLQSLVKDYFNSTMETLKIFETVTQCVHEAKRGQRYIKAAVAQFKKDSEEKDVGVKKKRYGKTLEELMKFKAMGNPFDDGLLKTQFELMNKQQESLFDRVTETKERIAKEIEEVQKRISNVNTATIVSHVVFGAAAFGYAAGCIALMCTGVGAPLGAGMVTLLPVIVVQWVGVNYVLNNSLEALQKQLKALNKVKPIPERITEGMEADKEGMKSVPEQVDELKDQISSLLQTVDDAIGSEGDEVDVKLDMESLEDDVKTLTTKITEVCETVAKYSKIIKEARLHVLEKITGTG.

A coiled-coil region spans residues 184-215 (QESLFDRVTETKERIAKEIEEVQKRISNVNTA). Helical transmembrane passes span 217-237 (IVSHVVFGAAAFGYAAGCIAL) and 242-262 (VGAPLGAGMVTLLPVIVVQWV). Residues 264–361 (VNYVLNNSLE…TTKITEVCET (98 aa)) adopt a coiled-coil conformation.

This sequence belongs to the UPF0496 family.

The protein localises to the membrane. This chain is UPF0496 protein At3g28310/At3g28320, found in Arabidopsis thaliana (Mouse-ear cress).